We begin with the raw amino-acid sequence, 495 residues long: UDP-glycosyltransferase 73C10 (495 aa).

Residue His-24 is the Proton acceptor of the active site. His-24 serves as a coordination point for an anthocyanidin. Asp-129 (charge relay) is an active-site residue. 6 residues coordinate UDP-alpha-D-glucose: Gln-358, His-373, Trp-376, Asn-377, Ser-378, and Glu-381. Gly-396 contacts an anthocyanidin. Residues Asp-397 and Gln-398 each coordinate UDP-alpha-D-glucose.

This sequence belongs to the UDP-glycosyltransferase family.

It carries out the reaction oleanolate + UDP-alpha-D-glucose = oleanolate 3-O-beta-D-glucoside + UDP + H(+). Functionally, catalyzes the transfer of a glucose (Glc) moiety from UDP-Glc to the C-3 position of the oleanane sapogenins oleanolate and hederagenin, and to the C-28 carboxylic group of the lupane sapogenin betulinate. The monoglucosylated hederagenin 3-O-beta-D-glucoside is a feeding deterrent of the yellow-striped flea beetle (Phyllotreta nemorum). In Barbarea vulgaris (Yellow rocket), this protein is UDP-glycosyltransferase 73C10.